We begin with the raw amino-acid sequence, 70 residues long: Homeobox protein OTX2 (70 aa).

Positions 34-70 are disordered; that stretch reads HQLPGPGATLSPMGTNAVTSHLNQSPASLSTQGYGAS. A compositionally biased stretch (polar residues) spans 45–70; sequence PMGTNAVTSHLNQSPASLSTQGYGAS.

This sequence belongs to the paired homeobox family. Bicoid subfamily.

Its subcellular location is the nucleus. Its function is as follows. Transcription factor probably involved in the development of the brain and the sense organs. Can bind to the bicoid/BCD target sequence (BTS): 5'-TCTAATCCC-3'. The chain is Homeobox protein OTX2 (Otx2) from Rattus norvegicus (Rat).